The primary structure comprises 368 residues: Peptide chain release factor 2 (368 aa).

N5-methylglutamine is present on glutamine 250.

It belongs to the prokaryotic/mitochondrial release factor family. Methylated by PrmC. Methylation increases the termination efficiency of RF2.

The protein localises to the cytoplasm. In terms of biological role, peptide chain release factor 2 directs the termination of translation in response to the peptide chain termination codons UGA and UAA. This is Peptide chain release factor 2 from Rickettsia africae (strain ESF-5).